We begin with the raw amino-acid sequence, 54 residues long: Large ribosomal subunit protein bL32c (54 aa).

This sequence belongs to the bacterial ribosomal protein bL32 family.

Its subcellular location is the plastid. It is found in the chloroplast. This Lactuca sativa (Garden lettuce) protein is Large ribosomal subunit protein bL32c.